A 612-amino-acid polypeptide reads, in one-letter code: Dihydroxy-acid dehydratase (612 aa).

Aspartate 81 is a Mg(2+) binding site. Cysteine 122 contacts [2Fe-2S] cluster. Aspartate 123 and lysine 124 together coordinate Mg(2+). The residue at position 124 (lysine 124) is an N6-carboxylysine. Residue cysteine 193 participates in [2Fe-2S] cluster binding. Glutamate 489 lines the Mg(2+) pocket. The Proton acceptor role is filled by serine 515.

This sequence belongs to the IlvD/Edd family. In terms of assembly, homodimer. [2Fe-2S] cluster serves as cofactor. It depends on Mg(2+) as a cofactor.

The enzyme catalyses (2R)-2,3-dihydroxy-3-methylbutanoate = 3-methyl-2-oxobutanoate + H2O. It catalyses the reaction (2R,3R)-2,3-dihydroxy-3-methylpentanoate = (S)-3-methyl-2-oxopentanoate + H2O. Its pathway is amino-acid biosynthesis; L-isoleucine biosynthesis; L-isoleucine from 2-oxobutanoate: step 3/4. It functions in the pathway amino-acid biosynthesis; L-valine biosynthesis; L-valine from pyruvate: step 3/4. Its function is as follows. Functions in the biosynthesis of branched-chain amino acids. Catalyzes the dehydration of (2R,3R)-2,3-dihydroxy-3-methylpentanoate (2,3-dihydroxy-3-methylvalerate) into 2-oxo-3-methylpentanoate (2-oxo-3-methylvalerate) and of (2R)-2,3-dihydroxy-3-methylbutanoate (2,3-dihydroxyisovalerate) into 2-oxo-3-methylbutanoate (2-oxoisovalerate), the penultimate precursor to L-isoleucine and L-valine, respectively. This chain is Dihydroxy-acid dehydratase, found in Xanthomonas campestris pv. campestris (strain B100).